Consider the following 71-residue polypeptide: uncharacterized protein (71 aa).

Belongs to the varicellovirus ORF57 protein family.

This is an uncharacterized protein from Homo sapiens (Human).